The sequence spans 571 residues: Urease subunit alpha (571 aa).

In terms of domain architecture, Urease spans 134 to 571 (GAIDTHIHFI…LPMAQRYFLF (438 aa)). Residues histidine 139, histidine 141, and lysine 222 each coordinate Ni(2+). Residue lysine 222 is modified to N6-carboxylysine. Histidine 224 contacts substrate. Positions 251 and 277 each coordinate Ni(2+). The active-site Proton donor is the histidine 325. Position 365 (aspartate 365) interacts with Ni(2+).

The protein belongs to the metallo-dependent hydrolases superfamily. Urease alpha subunit family. Heterotrimer of UreA (gamma), UreB (beta) and UreC (alpha) subunits. Three heterotrimers associate to form the active enzyme. Ni cation serves as cofactor. Carboxylation allows a single lysine to coordinate two nickel ions.

Its subcellular location is the cytoplasm. The catalysed reaction is urea + 2 H2O + H(+) = hydrogencarbonate + 2 NH4(+). The protein operates within nitrogen metabolism; urea degradation; CO(2) and NH(3) from urea (urease route): step 1/1. The sequence is that of Urease subunit alpha from Bordetella parapertussis (strain 12822 / ATCC BAA-587 / NCTC 13253).